A 141-amino-acid chain; its full sequence is Large ribosomal subunit protein bL17 (141 aa).

It belongs to the bacterial ribosomal protein bL17 family. Part of the 50S ribosomal subunit. Contacts protein L32.

This chain is Large ribosomal subunit protein bL17, found in Gluconacetobacter diazotrophicus (strain ATCC 49037 / DSM 5601 / CCUG 37298 / CIP 103539 / LMG 7603 / PAl5).